Consider the following 312-residue polypeptide: Tumor necrosis factor receptor type 1-associated DEATH domain protein (312 aa).

A Nuclear export signal motif is present at residues 147 to 163 (LRDEELTELENALRNLT). The tract at residues 166-200 (SAGGQGSDVQGTPAPLQSLAPSPPEEKPPPPQPGQ) is disordered. One can recognise a Death domain in the interval 215–305 (NLQDQQKFAR…SLAEDLLGLA (91 aa)). The segment at 222-289 (FARSVGLKWR…ATLQRLVEAL (68 aa)) is interaction with KRT14 and KRT18. The Nuclear localization signal motif lies at 231–244 (RKVGRSLQRSCRAL).

In terms of assembly, stimulation of TNF-alpha receptor TNFRSF1A leads to the formation of two distinct signaling complexes. Plasma membrane-bound complex I is composed of TNFRSF1A, TRADD, RIPK1, TRAF2 and BIRC2/c-IAP1 or BIRC3 which interacts with CHUCK/IKK-alpha, IKBKB/IKK-beta and IKBKG/IKK-gamma promoting cell survival. Subsequently, TRADD, RIPK1 and TRAF2 dissociate from TNFRSF1A and form cytoplasmic complex II with FADD and caspase CASP8 promoting cell apoptosis. Within complex I, interacts with TNFRSF1A/TNFR1, TRAF2 and kinase RIPK1. Within complex I, interacts with TRPC4AP; the interaction promotes NF-kappa B activation. UXT1 associates with complex I; the interaction prevents the formation of complex II. Within complex I Interacts with scaffold protein DAB2IP. Interacts with autophagy receptor SQSTM1. Interacts with E3 ligase TRIP12. Interacts with kinase HIPK2. Interacts with keratin KRT14. Interacts with keratin KRT18. Interacts with keratins KRT16 and KRT17. Interacts with FADD. Interacts with TOMM70. Interacts with TMC8; the interaction impairs the formation of complex I and facilites complex II formation.

It localises to the nucleus. The protein resides in the cytoplasm. It is found in the cytoskeleton. Adapter molecule for TNFRSF1A/TNFR1 that specifically associates with the cytoplasmic domain of activated TNFRSF1A/TNFR1 mediating its interaction with FADD. Overexpression of TRADD leads to two major TNF-induced responses, apoptosis and activation of NF-kappa-B. The nuclear form acts as a tumor suppressor by preventing ubiquitination and degradation of isoform p19ARF/ARF of CDKN2A by TRIP12: acts by interacting with TRIP12, leading to disrupt interaction between TRIP12 and isoform p19ARF/ARF of CDKN2A. This is Tumor necrosis factor receptor type 1-associated DEATH domain protein from Bos taurus (Bovine).